We begin with the raw amino-acid sequence, 330 residues long: Aspartate--ammonia ligase (330 aa).

It belongs to the class-II aminoacyl-tRNA synthetase family. AsnA subfamily.

Its subcellular location is the cytoplasm. The catalysed reaction is L-aspartate + NH4(+) + ATP = L-asparagine + AMP + diphosphate + H(+). Its pathway is amino-acid biosynthesis; L-asparagine biosynthesis; L-asparagine from L-aspartate (ammonia route): step 1/1. The polypeptide is Aspartate--ammonia ligase (Streptococcus pyogenes serotype M3 (strain ATCC BAA-595 / MGAS315)).